Reading from the N-terminus, the 537-residue chain is Cytochrome bd ubiquinol oxidase subunit 1 (537 aa).

Residues 1 to 24 (MISESVVDLSRLQFAMTALYHFLF) are Cytoplasmic-facing. Heme b is bound at residue His-21. Residues 25-44 (VPLTLGMTFLLAIMESVYVM) traverse the membrane as a helical segment. The Periplasmic portion of the chain corresponds to 45–96 (TGKQVYKDMVKFWGKLFGINFALGVTTGITMEFQFGTNWAYYSHYVGDIFGA). The helical transmembrane segment at 97–116 (PLAIEGLTAFFLESTFIGMF) threads the bilayer. Topologically, residues 117-131 (FFGWDRLSKIQHLAV) are cytoplasmic. A helical membrane pass occupies residues 132–151 (TWLVALGSNLSALWILVANG). The Periplasmic segment spans residues 152 to 189 (WMQHPVGAEFNFETMRMELVDFGALLLNPVAQVKFVHT). His-188 is a heme b binding site. Residues 190–209 (VASGYVTGAVFVLAISSYYL) traverse the membrane as a helical segment. Topologically, residues 210 to 221 (LKKRDLGFARRS) are cytoplasmic. A helical transmembrane segment spans residues 222-241 (FAIASAFGMASILSVIVLGD). Residues 242-394 (ESGYEVGEVQ…VASMFWSFRA (153 aa)) are Periplasmic-facing. Position 395 (Met-395) interacts with heme b. A helical transmembrane segment spans residues 395–414 (MVGAGFAMLILFVCAFWASA). The Cytoplasmic portion of the chain corresponds to 415 to 472 (RKNEESKPWLLKFALYSLPLPWIATQTGWFVAEHGRQPWTIGGVLPTHLSASSLSTGD). The helical transmembrane segment at 473–492 (LWGSLIALIAFYTLLLVVEM) threads the bilayer. Residues 493–537 (YLMIRFARLGPSSLHTGRYHFEQLEQHAVKHASPSQADPQQPVNA) lie on the Periplasmic side of the membrane.

Belongs to the cytochrome ubiquinol oxidase subunit 1 family. Heterodimer of subunits I and II. Heme b is required as a cofactor. Heme d cis-diol serves as cofactor.

The protein localises to the cell inner membrane. It catalyses the reaction 2 a ubiquinol + O2(in) + 4 H(+)(in) = 2 a ubiquinone + 2 H2O(in) + 4 H(+)(out). Its function is as follows. May be involved in maintaining the low intracellular oxygen concentration required for nitrogen fixation. The sequence is that of Cytochrome bd ubiquinol oxidase subunit 1 (cydA) from Azotobacter vinelandii.